Here is a 338-residue protein sequence, read N- to C-terminus: Ketol-acid reductoisomerase (NADP(+)) (338 aa).

Residues 1–181 enclose the KARI N-terminal Rossmann domain; it reads MKVYYDKDCD…GGGRTGIIET (181 aa). NADP(+) contacts are provided by residues 24–27, arginine 47, serine 50, threonine 52, and 82–85; these read YGSQ and DEFQ. Residue histidine 107 is part of the active site. Glycine 133 contacts NADP(+). Residues 182–327 form the KARI C-terminal knotted domain; the sequence is TFKDETETDL…EQLRAMMPWI (146 aa). Mg(2+) contacts are provided by aspartate 190, glutamate 194, glutamate 226, and glutamate 230. Serine 251 contacts substrate.

Belongs to the ketol-acid reductoisomerase family. Mg(2+) serves as cofactor.

It carries out the reaction (2R)-2,3-dihydroxy-3-methylbutanoate + NADP(+) = (2S)-2-acetolactate + NADPH + H(+). It catalyses the reaction (2R,3R)-2,3-dihydroxy-3-methylpentanoate + NADP(+) = (S)-2-ethyl-2-hydroxy-3-oxobutanoate + NADPH + H(+). It participates in amino-acid biosynthesis; L-isoleucine biosynthesis; L-isoleucine from 2-oxobutanoate: step 2/4. Its pathway is amino-acid biosynthesis; L-valine biosynthesis; L-valine from pyruvate: step 2/4. Functionally, involved in the biosynthesis of branched-chain amino acids (BCAA). Catalyzes an alkyl-migration followed by a ketol-acid reduction of (S)-2-acetolactate (S2AL) to yield (R)-2,3-dihydroxy-isovalerate. In the isomerase reaction, S2AL is rearranged via a Mg-dependent methyl migration to produce 3-hydroxy-3-methyl-2-ketobutyrate (HMKB). In the reductase reaction, this 2-ketoacid undergoes a metal-dependent reduction by NADPH to yield (R)-2,3-dihydroxy-isovalerate. This is Ketol-acid reductoisomerase (NADP(+)) from Ectopseudomonas mendocina (strain ymp) (Pseudomonas mendocina).